The sequence spans 430 residues: GTPase Obg (430 aa).

The 158-residue stretch at 1 to 158 (MFVDQVKINV…IELQLELKVL (158 aa)) folds into the Obg domain. The interval 122–143 (GGRGNMRFASPRNPAPEISENG) is disordered. The OBG-type G domain occupies 159–334 (ADVGLLGFPS…LVARTADVLE (176 aa)). GTP-binding positions include 165-172 (GFPSVGKS), 190-194 (FTTLV), 212-215 (DIPG), 282-285 (TKMD), and 315-317 (SSI). Mg(2+)-binding residues include Ser-172 and Thr-192. Residues 353 to 430 (YEFSSEKDFT…ILDFVFEFVE (78 aa)) enclose the OCT domain.

This sequence belongs to the TRAFAC class OBG-HflX-like GTPase superfamily. OBG GTPase family. As to quaternary structure, monomer. The cofactor is Mg(2+).

The protein localises to the cytoplasm. An essential GTPase which binds GTP, GDP and possibly (p)ppGpp with moderate affinity, with high nucleotide exchange rates and a fairly low GTP hydrolysis rate. Plays a role in control of the cell cycle, stress response, ribosome biogenesis and in those bacteria that undergo differentiation, in morphogenesis control. The polypeptide is GTPase Obg (Pediococcus pentosaceus (strain ATCC 25745 / CCUG 21536 / LMG 10740 / 183-1w)).